A 592-amino-acid polypeptide reads, in one-letter code: Polyadenylate-binding protein, cytoplasmic and nuclear (592 aa).

Basic and acidic residues predominate over residues 1-10; sequence MSDITEKTAE. The segment at 1-43 is disordered; that stretch reads MSDITEKTAEQLENLQINDDQQPAQSASAPSTSASESEASSVS. Residues 11-20 show a composition bias toward polar residues; the sequence is QLENLQINDD. Low complexity predominate over residues 21-43; sequence QQPAQSASAPSTSASESEASSVS. RRM domains are found at residues 50–128, 138–215, 231–308, and 334–411; these read ASLY…WSER, GNIF…MHVP, TNIY…RAQK, and VNLF…IAQR. The PABC domain occupies 507-586; that stretch reads NQFPRHQQQH…ALAAYENFKK (80 aa).

The protein belongs to the polyadenylate-binding protein type-1 family.

Its subcellular location is the cytoplasm. It localises to the nucleus. Binds the poly(A) tail of mRNA. Appears to be an important mediator of the multiple roles of the poly(A) tail in mRNA biogenesis, stability and translation. In the nucleus, involved in both mRNA cleavage and polyadenylation. Is also required for efficient mRNA export to the cytoplasm. Acts in concert with a poly(A)-specific nuclease (PAN) to affect poly(A) tail shortening, which may occur concomitantly with either nucleocytoplasmic mRNA transport or translational initiation. In the cytoplasm, stimulates translation initiation and regulates mRNA decay through translation termination-coupled poly(A) shortening, probably mediated by PAN. The chain is Polyadenylate-binding protein, cytoplasmic and nuclear (PAB1) from Kluyveromyces lactis (strain ATCC 8585 / CBS 2359 / DSM 70799 / NBRC 1267 / NRRL Y-1140 / WM37) (Yeast).